Reading from the N-terminus, the 421-residue chain is Hydrolyase poxO (421 aa).

Ser239 (nucleophile) is an active-site residue.

The protein belongs to the AB hydrolase superfamily. FUS2 hydrolase family. As to quaternary structure, homodimer.

Its pathway is secondary metabolite biosynthesis. Functionally, hydrolyase; part of the gene cluster that mediates the biosynthesis of oxaleimides, cytotoxic compounds containing an unusual disubstituted succinimide moiety. The first step of the pathway is provided by the HR-PKS poxF that serves in a new mode of collaborative biosynthesis with the PKS-NRPS poxE, by providing the olefin containing amino acid substrate via the synthesis of an ACP-bound dec-4-enoate. The cytochrome P450 monooxygenase poxM-catalyzed oxidation at the alpha-position creates the enzyme-bound 2-hydroxydec-4-enoyl-ACP thioester, which may be prone to spontaneous hydrolysis to yield 2-hydroxydec-4-enoic acid due to increased electrophilicity of the carbonyl. 2-hydroxydec-4-enoic acid can then be further oxidized by poxM to yield the alpha-ketoacid 2-oxodec-4-enoicacid, which is reductively aminated by the aminotransferase poxL to yield (S,E)-2-aminodec-4-enoic acid. The Hybrid PKS-NRPS synthetase poxE then performs condensation between the octaketide product of its PKS modules and the amino group of (S,E)-2-aminodec-4-enoic acid which is activated and incorporated by the adenylation domain. The resulting aminoacyl product can be cyclized by the Diels-Alderase PoxQ and reductively released by the reductive (R) domain of poxE to yield an aldehyde intermediate. The released aldehyde is then substrate for a Knoevenagel condensation by the hydrolyase poxO followed by an oxidation at the 5-position of the pyrrolidone ring. The presence of the olefin from the amino acid building block allows for migration of the substituted allyl group to occur. This allylic transposition reaction takes place in a conjugate addition, semipinacol-like fashion to yield a succinimide intermediate. Iterative two-electron oxidations of the C7 methyl of the succinimide intermediate to the carboxylic acid can be catalyzed by one of two remaining cytochrome P450 monooxygenasess poxC or poxD to yield oxaleimide A. Subsequent oxidation yields the maleimide scaffold oxaleimide I. Both oxaleimide A and oxaleimide I can undergo oxidative modifications in the decalin ring to yield the series of products oxaleimides B to H. The protein is Hydrolyase poxO of Penicillium oxalicum.